Consider the following 92-residue polypeptide: Ezrin (92 aa).

One can recognise an FERM domain in the interval 1-72; that stretch reads QLFDQVVKGF…PDFVFYAPRR (72 aa). The residue at position 15 (K15) is an N6-acetyllysine. Positions 42 to 92 are interaction with SCYL3; the sequence is EIRNISFNDKKFVIKPIDKKAPDFVFYAPRRKPDTIEVQQMKLQDFEQKTK.

In terms of assembly, interacts with PALS1 and NHERF2. Found in a complex with EZR, PODXL and NHERF2. Interacts with MCC, PLEKHG6, PODXL, SCYL3/PACE1, NHERF1 and TMEM8B. Interacts (when phosphorylated) with FES/FPS. Interacts with dimeric S100P, the interaction may be activating through unmasking of F-actin binding sites. Identified in complexes that contain VIM, EZR, AHNAK, BFSP1, BFSP2, ANK2, PLEC, PRX and spectrin. Detected in a complex composed of at least EZR, AHNAK, PPL and PRX. Interacts with PDPN (via cytoplasmic domain); activates RHOA and promotes epithelial-mesenchymal transition. Interacts with SPN/CD43 cytoplasmic tail, CD44 and ICAM2. Interacts with CLIC5; may work together in a complex which also includes RDX and MYO6 to stabilize linkages between the plasma membrane and subjacent actin cytoskeleton at the base of stereocilia. Phosphorylated by tyrosine-protein kinases. Phosphorylation by ROCK2 suppresses the head-to-tail association of the N-terminal and C-terminal halves resulting in an opened conformation which is capable of actin and membrane-binding. Post-translationally, S-nitrosylation is induced by interferon-gamma and oxidatively-modified low-densitity lipoprotein (LDL(ox)) possibly implicating the iNOS-S100A8/9 transnitrosylase complex.

The protein localises to the apical cell membrane. Its subcellular location is the cell projection. The protein resides in the microvillus membrane. It is found in the ruffle membrane. It localises to the cytoplasm. The protein localises to the cell cortex. Its subcellular location is the cytoskeleton. The protein resides in the microvillus. With respect to regulation, a head-to-tail association, of the N-terminal and C-terminal halves results in a closed conformation (inactive form) which is incapable of actin or membrane-binding. Functionally, probably involved in connections of major cytoskeletal structures to the plasma membrane. In epithelial cells, required for the formation of microvilli and membrane ruffles on the apical pole. Along with PLEKHG6, required for normal macropinocytosis. The polypeptide is Ezrin (Mesocricetus auratus (Golden hamster)).